Here is a 698-residue protein sequence, read N- to C-terminus: Cytoplasmic polyadenylation element-binding protein 3 (698 aa).

Positions M1–K11 are enriched in basic and acidic residues. Disordered regions lie at residues M1–G114 and A158–A208. Positions Q13–P28 are enriched in low complexity. Over residues E29 to T44 the composition is skewed to polar residues. A compositionally biased stretch (pro residues) spans P87–P96. The segment covering L103–G114 has biased composition (polar residues). The segment covering Q165 to Q185 has biased composition (pro residues). A compositionally biased stretch (low complexity) spans P186 to A208. A phosphoserine mark is found at S192, S195, and S290. An Asymmetric dimethylarginine modification is found at R308. 2 RRM domains span residues R441–L532 and K549–L631.

It belongs to the RRM CPEB family. Following synaptic activity, forms amyloid-like oligomers. Aggregation requires an intact actin cytoskeleton. Interacts with STAT5B; this inhibits STAT5B-mediated transcriptional activation. Interacts with E3 ubiquitin-protein ligase NEURL1; this leads to monoubiquitination and activation of CPEB3. Interacts with CAPN2; this leads to cleavage of CPEB3. Interacts (via C-terminal RNA-binding region) with TOB1; TOB1 also binds CNOT7/CAF1 and recruits it to CPEB3 to form a ternary complex. Interacts with SUMO-conjugating enzyme UBC9. Interacts with IPO5; the interaction is enhanced in a RAN-regulated manner following neuronal stimulation and mediates CPEB3 nuclear import. Interacts with exportin XPO1/CRM1. Activated by NEURL1-mediated monoubiquitination, resulting in the growth of new dendritic spines and increased levels of GRIA1 and GRIA2. NEURL1-mediated monoubiquitination facilitates synaptic plasticity and hippocampal-dependent memory storage. Post-translationally, under basal unstimulated conditions when CPEB3 is mainly unaggregated, sumoylated and acts as a translational repressor. Following neuronal stimulation, becomes desumoylated and aggregated which is required for the translation of mRNA targets and for dendritic filopodia formation. In terms of processing, following neuronal stimulation, cleaved by CAPN2 which abolishes its translational repressor activity, leading to translation of CPEB3 target mRNAs. Phosphorylation is enhanced by neuronal stimulation.

It localises to the cytoplasm. It is found in the nucleus. The protein localises to the synapse. The protein resides in the cell projection. Its subcellular location is the dendrite. It localises to the postsynaptic density. Sequence-specific RNA-binding protein which acts as a translational repressor in the basal unstimulated state but, following neuronal stimulation, acts as a translational activator. In contrast to CPEB1, does not bind to the cytoplasmic polyadenylation element (CPE), a uridine-rich sequence element within the mRNA 3'-UTR, but binds to a U-rich loop within a stem-loop structure. Required for the consolidation and maintenance of hippocampal-based long term memory. In the basal state, binds to the mRNA 3'-UTR of the glutamate receptors GRIA2/GLUR2 mRNA and negatively regulates their translation. Also represses the translation of DLG4, GRIN1, GRIN2A and GRIN2B. When activated, acts as a translational activator of GRIA1 and GRIA2. In the basal state, suppresses SUMO2 translation but activates it following neuronal stimulation. Binds to the 3'-UTR of TRPV1 mRNA and represses TRPV1 translation which is required to maintain normal thermoception. Binds actin mRNA, leading to actin translational repression in the basal state and to translational activation following neuronal stimulation. Negatively regulates target mRNA levels by binding to TOB1 which recruits CNOT7/CAF1 to a ternary complex and this leads to target mRNA deadenylation and decay. In addition to its role in translation, binds to and inhibits the transcriptional activation activity of STAT5B without affecting its dimerization or DNA-binding activity. This, in turn, represses transcription of the STAT5B target gene EGFR which has been shown to play a role in enhancing learning and memory performance. In contrast to CPEB1, CPEB2 and CPEB4, not required for cell cycle progression. The chain is Cytoplasmic polyadenylation element-binding protein 3 (CPEB3) from Homo sapiens (Human).